We begin with the raw amino-acid sequence, 326 residues long: Probable cell division protein WhiA (326 aa).

A DNA-binding region (H-T-H motif) is located at residues 275-308 (SLDELGRLADPPMTKDAIAGRIRRLLAMADKRAL).

It belongs to the WhiA family.

Involved in cell division and chromosome segregation. This chain is Probable cell division protein WhiA, found in Paenarthrobacter aurescens (strain TC1).